Here is a 288-residue protein sequence, read N- to C-terminus: Cyclin-dependent kinase 2 homolog (288 aa).

The region spanning 4–284 (YHGLEKIGEG…AKQAIEHPYF (281 aa)) is the Protein kinase domain. Residues 10 to 18 (IGEGTYGVV) and Lys32 contribute to the ATP site. The residue at position 14 (Thr14) is a Phosphothreonine. Tyr15 carries the post-translational modification Phosphotyrosine. The active-site Proton acceptor is the Asp125. Thr158 carries the phosphothreonine modification.

Belongs to the protein kinase superfamily. CMGC Ser/Thr protein kinase family. CDC2/CDKX subfamily. May form a complex composed of at least the catalytic subunit CRK2 and a cyclin. The cofactor is Mg(2+).

The protein resides in the cytoplasm. The enzyme catalyses L-seryl-[protein] + ATP = O-phospho-L-seryl-[protein] + ADP + H(+). It catalyses the reaction L-threonyl-[protein] + ATP = O-phospho-L-threonyl-[protein] + ADP + H(+). It carries out the reaction [DNA-directed RNA polymerase] + ATP = phospho-[DNA-directed RNA polymerase] + ADP + H(+). Phosphorylation at Thr-14 or Tyr-15 inactivates the enzyme, while phosphorylation at Thr-158 activates it. Functionally, serine/threonine-protein kinase. Involved in the control of the cell cycle. Required for entry into S-phase and mitosis. Probable component of the kinase complex that phosphorylates the repetitive C-terminus of RNA polymerase II. The protein is Cyclin-dependent kinase 2 homolog of Plasmodium chabaudi chabaudi.